The primary structure comprises 551 residues: Eukaryotic translation initiation factor 3 subunit D-2 (551 aa).

Positions 91–154 (TKPYQRGRYR…RNTQNMGRRF (64 aa)) are disordered. The span at 95-113 (QRGRYRPNMRNNVRSRGRT) shows a compositional bias: basic residues. Low complexity predominate over residues 121–136 (ASLGGSTAGGATASTT). The interval 290-304 (QFDLLTVNETSVEPP) is RNA gate. Residues 527–551 (PENAFDSDGDEEEESSDPLSNSNDN) are disordered. A compositionally biased stretch (acidic residues) spans 531-542 (FDSDGDEEEESS).

This sequence belongs to the eIF-3 subunit D family. In terms of assembly, component of the eukaryotic translation initiation factor 3 (eIF-3) complex. The eIF-3 complex interacts with pix.

The protein resides in the cytoplasm. In terms of biological role, mRNA cap-binding component of the eukaryotic translation initiation factor 3 (eIF-3) complex, which is involved in protein synthesis of a specialized repertoire of mRNAs and, together with other initiation factors, stimulates binding of mRNA and methionyl-tRNAi to the 40S ribosome. The eIF-3 complex specifically targets and initiates translation of a subset of mRNAs involved in cell proliferation. In the eIF-3 complex, eif3d specifically recognizes and binds the 7-methylguanosine cap of a subset of mRNAs. In Drosophila melanogaster (Fruit fly), this protein is Eukaryotic translation initiation factor 3 subunit D-2.